The following is a 73-amino-acid chain: Long neurotoxin 1 (73 aa).

5 disulfides stabilise this stretch: cysteine 3/cysteine 21, cysteine 14/cysteine 42, cysteine 27/cysteine 31, cysteine 46/cysteine 57, and cysteine 58/cysteine 63.

This sequence belongs to the three-finger toxin family. Long-chain subfamily. Type II alpha-neurotoxin sub-subfamily. Expressed by the venom gland.

Its subcellular location is the secreted. Binds with high affinity to muscular (alpha-1/CHRNA1) and neuronal (alpha-7/CHRNA7) nicotinic acetylcholine receptor (nAChR) and inhibits acetylcholine from binding to the receptor, thereby impairing neuromuscular and neuronal transmission. This is Long neurotoxin 1 from Ophiophagus hannah (King cobra).